Consider the following 352-residue polypeptide: Protein RecA (352 aa).

Residue 65 to 72 participates in ATP binding; the sequence is GPESSGKT. A disordered region spans residues 333–352; sequence VKAAANREPVEEVEEADTDI. Acidic residues predominate over residues 343–352; the sequence is EEVEEADTDI.

This sequence belongs to the RecA family.

The protein resides in the cytoplasm. Its function is as follows. Can catalyze the hydrolysis of ATP in the presence of single-stranded DNA, the ATP-dependent uptake of single-stranded DNA by duplex DNA, and the ATP-dependent hybridization of homologous single-stranded DNAs. It interacts with LexA causing its activation and leading to its autocatalytic cleavage. This Pseudomonas fluorescens protein is Protein RecA.